A 206-amino-acid polypeptide reads, in one-letter code: Alpha-1-acid glycoprotein 3 (206 aa).

Residues 1–18 (MELHTVLIMLSLLPLLEA) form the signal peptide. Asn33, Asn75, and Asn103 each carry an N-linked (GlcNAc...) asparagine glycan. Cys90 and Cys183 are joined by a disulfide. The tract at residues 187-206 (EKKHLELEKETKKDPEESQA) is disordered.

This sequence belongs to the calycin superfamily. Lipocalin family.

The protein localises to the secreted. Functions as a transport protein in the blood stream. Binds various ligands in the interior of its beta-barrel domain. Appears to function in modulating the activity of the immune system during the acute-phase reaction. This chain is Alpha-1-acid glycoprotein 3 (Orm3), found in Mus musculus (Mouse).